A 560-amino-acid chain; its full sequence is Oxygen-dependent choline dehydrogenase (560 aa).

Residue 8-37 (DYIIIGAGSAGNVLATRLTEDADVSVLLLE) coordinates FAD. Catalysis depends on histidine 475, which acts as the Proton acceptor.

This sequence belongs to the GMC oxidoreductase family. The cofactor is FAD.

The enzyme catalyses choline + A = betaine aldehyde + AH2. It carries out the reaction betaine aldehyde + NAD(+) + H2O = glycine betaine + NADH + 2 H(+). Its pathway is amine and polyamine biosynthesis; betaine biosynthesis via choline pathway; betaine aldehyde from choline (cytochrome c reductase route): step 1/1. Functionally, involved in the biosynthesis of the osmoprotectant glycine betaine. Catalyzes the oxidation of choline to betaine aldehyde and betaine aldehyde to glycine betaine at the same rate. The sequence is that of Oxygen-dependent choline dehydrogenase from Stenotrophomonas maltophilia (strain K279a).